Consider the following 469-residue polypeptide: Mitochondrial adenyl nucleotide antiporter SLC25A25 (469 aa).

The regulatory N-terminal domain stretch occupies residues methionine 1–aspartate 165. Residues methionine 1 to histidine 189 lie on the Mitochondrial intermembrane side of the membrane. 3 consecutive EF-hand domains span residues threonine 47–glutamate 80, aspartate 78–lysine 113, and isoleucine 114–glutamate 149. Ca(2+)-binding residues include aspartate 60, aspartate 62, aspartate 64, glutamine 66, and glutamate 71. Positions isoleucine 151–histidine 160 are linker region. The interval valine 166–arginine 469 is C-terminal transmembrane transporter domain. Solcar repeat units follow at residues glycine 184–leucine 270, leucine 278–alanine 363, and proline 375–threonine 463. Residues leucine 190–leucine 207 traverse the membrane as a helical segment. Residues aspartate 208–arginine 244 are Mitochondrial matrix-facing. The helical transmembrane segment at glycine 245–tyrosine 264 threads the bilayer. At glutamate 265–glycine 287 the chain is on the mitochondrial intermembrane side. A helical membrane pass occupies residues serine 288–methionine 301. The Mitochondrial matrix segment spans residues glutamate 302–lysine 337. The chain crosses the membrane as a helical span at residues glycine 338 to tyrosine 357. Topologically, residues glutamate 358 to leucine 380 are mitochondrial intermembrane. A helical membrane pass occupies residues leucine 381–leucine 398. Topologically, residues alanine 399–arginine 437 are mitochondrial matrix. Residues glycine 438–tyrosine 457 form a helical membrane-spanning segment. The Mitochondrial intermembrane segment spans residues glutamate 458–arginine 469.

Belongs to the mitochondrial carrier (TC 2.A.29) family. Widely expressed. Expressed in fetal and adult liver, skeletal muscle, testis, ovary, hippocampus and caudate nucleus. In terms of tissue distribution, expressed in all tissues tested. As to expression, expression is restricted to kidney and lung.

The protein resides in the mitochondrion inner membrane. It carries out the reaction Mg(2+)(out) + phosphate(in) + ATP(out) = Mg(2+)(in) + phosphate(out) + ATP(in). Its activity is regulated as follows. Activated by an increase in cytosolic calcium levels that induce a conformational change of the N-terminal regulatory domain, uncapping the channel and allowing transport. In terms of biological role, electroneutral antiporter that most probably mediates the transport of adenyl nucleotides through the inner mitochondrial membrane. Originally identified as an ATP-magnesium/inorganic phosphate antiporter, it could have a broader specificity for adenyl nucleotides. By regulating the mitochondrial matrix adenyl nucleotide pool could adapt to changing cellular energetic demands and indirectly regulate adenyl nucleotide-dependent metabolic pathways. This Homo sapiens (Human) protein is Mitochondrial adenyl nucleotide antiporter SLC25A25.